Reading from the N-terminus, the 121-residue chain is Large ribosomal subunit protein uL14 (121 aa).

It belongs to the universal ribosomal protein uL14 family. As to quaternary structure, part of the 50S ribosomal subunit. Forms a cluster with proteins L3 and L19. In the 70S ribosome, L14 and L19 interact and together make contacts with the 16S rRNA in bridges B5 and B8.

Its function is as follows. Binds to 23S rRNA. Forms part of two intersubunit bridges in the 70S ribosome. This Prochlorococcus marinus (strain MIT 9303) protein is Large ribosomal subunit protein uL14.